An 89-amino-acid polypeptide reads, in one-letter code: Small ribosomal subunit protein uS15 (89 aa).

It belongs to the universal ribosomal protein uS15 family. Part of the 30S ribosomal subunit. Forms a bridge to the 50S subunit in the 70S ribosome, contacting the 23S rRNA.

One of the primary rRNA binding proteins, it binds directly to 16S rRNA where it helps nucleate assembly of the platform of the 30S subunit by binding and bridging several RNA helices of the 16S rRNA. Its function is as follows. Forms an intersubunit bridge (bridge B4) with the 23S rRNA of the 50S subunit in the ribosome. The protein is Small ribosomal subunit protein uS15 of Burkholderia ambifaria (strain MC40-6).